The sequence spans 965 residues: Klaroid protein (965 aa).

Positions 1–20 (MSENTYQIETRRRSRSKTPF) are disordered. Transmembrane regions (helical) follow at residues 303–323 (TIGG…GSVL) and 343–363 (FLIF…LLLQ). Positions 585–612 (SSDAEVQIERLNREIAFIKLALSDKQAE) form a coiled coil. Residues 801–963 (GGQILSTRCT…YRFRVHGKPP (163 aa)) enclose the SUN domain.

In terms of assembly, core component of the LINC complex which is composed of inner nuclear membrane SUN domain-containing proteins coupled to outer nuclear membrane KASH domain-containing nesprins. As to expression, expressed in all cells in the eye disk.

It is found in the membrane. The protein localises to the cytoplasm. It localises to the cytoskeleton. The protein resides in the microtubule organizing center. Its subcellular location is the perinuclear region. Its function is as follows. Component of the LINC (LInker of Nucleoskeleton and Cytoskeleton) complex involved in the connection between the nuclear lamina and the cytoskeleton. Is required to nuclear migration in eye and to anchor klar in the nuclear membrane. The sequence is that of Klaroid protein from Drosophila melanogaster (Fruit fly).